We begin with the raw amino-acid sequence, 207 residues long: Ribosomal RNA small subunit methyltransferase G (207 aa).

S-adenosyl-L-methionine contacts are provided by residues Gly73, Leu78, 124–125 (VE), and Arg139.

Belongs to the methyltransferase superfamily. RNA methyltransferase RsmG family.

It localises to the cytoplasm. The enzyme catalyses guanosine(527) in 16S rRNA + S-adenosyl-L-methionine = N(7)-methylguanosine(527) in 16S rRNA + S-adenosyl-L-homocysteine. In terms of biological role, specifically methylates the N7 position of guanine in position 527 of 16S rRNA. This chain is Ribosomal RNA small subunit methyltransferase G, found in Cronobacter sakazakii (strain ATCC BAA-894) (Enterobacter sakazakii).